We begin with the raw amino-acid sequence, 124 residues long: PEP-dependent dihydroxyacetone kinase 1, phosphoryl donor subunit DhaM (124 aa).

Positions 4 to 124 constitute a PTS EIIA type-4 domain; sequence PYGVVIISHS…AANLKTIEIK (121 aa). Residue histidine 12 is the Tele-phosphohistidine intermediate of the active site.

The protein belongs to the PEP-utilizing enzyme family. Homodimer. The dihydroxyacetone kinase complex is composed of a homodimer of DhaM, a homodimer of DhaK and the subunit DhaL.

The protein resides in the cytoplasm. It catalyses the reaction dihydroxyacetone + phosphoenolpyruvate = dihydroxyacetone phosphate + pyruvate. In terms of biological role, component of the dihydroxyacetone kinase complex, which is responsible for the phosphoenolpyruvate (PEP)-dependent phosphorylation of dihydroxyacetone. DhaM serves as the phosphoryl donor. Is phosphorylated by phosphoenolpyruvate in an EI- and HPr-dependent reaction, and a phosphorelay system on histidine residues finally leads to phosphoryl transfer to DhaL and dihydroxyacetone. This chain is PEP-dependent dihydroxyacetone kinase 1, phosphoryl donor subunit DhaM, found in Listeria innocua serovar 6a (strain ATCC BAA-680 / CLIP 11262).